The following is a 197-amino-acid chain: Nucleoid occlusion factor SlmA (197 aa).

The HTH tetR-type domain occupies 7-67; it reads INRREHILQC…GLIEFIEDAI (61 aa). The H-T-H motif DNA-binding region spans 30 to 49; that stretch reads TTAKLAAEVGVSEAALYRHF.

The protein belongs to the nucleoid occlusion factor SlmA family. As to quaternary structure, homodimer. Interacts with FtsZ.

Its subcellular location is the cytoplasm. It localises to the nucleoid. Its function is as follows. Required for nucleoid occlusion (NO) phenomenon, which prevents Z-ring formation and cell division over the nucleoid. Acts as a DNA-associated cell division inhibitor that binds simultaneously chromosomal DNA and FtsZ, and disrupts the assembly of FtsZ polymers. SlmA-DNA-binding sequences (SBS) are dispersed on non-Ter regions of the chromosome, preventing FtsZ polymerization at these regions. The polypeptide is Nucleoid occlusion factor SlmA (Shewanella denitrificans (strain OS217 / ATCC BAA-1090 / DSM 15013)).